Reading from the N-terminus, the 344-residue chain is N-acetyl-gamma-glutamyl-phosphate reductase (344 aa).

Residue Cys-150 is part of the active site.

The protein belongs to the NAGSA dehydrogenase family. Type 1 subfamily.

It localises to the cytoplasm. It catalyses the reaction N-acetyl-L-glutamate 5-semialdehyde + phosphate + NADP(+) = N-acetyl-L-glutamyl 5-phosphate + NADPH + H(+). Its pathway is amino-acid biosynthesis; L-arginine biosynthesis; N(2)-acetyl-L-ornithine from L-glutamate: step 3/4. Its function is as follows. Catalyzes the NADPH-dependent reduction of N-acetyl-5-glutamyl phosphate to yield N-acetyl-L-glutamate 5-semialdehyde. The chain is N-acetyl-gamma-glutamyl-phosphate reductase from Pseudomonas paraeruginosa (strain DSM 24068 / PA7) (Pseudomonas aeruginosa (strain PA7)).